A 179-amino-acid chain; its full sequence is 3-hydroxyanthranilate 3,4-dioxygenase (179 aa).

Arg47 contributes to the O2 binding site. The Fe cation site is built by His51, Glu57, and His96. Glu57 serves as a coordination point for substrate. Substrate-binding residues include Arg100 and Glu110. Fe cation-binding residues include Cys125, Cys128, Cys162, and Cys165.

It belongs to the 3-HAO family. Requires Fe(2+) as cofactor.

It carries out the reaction 3-hydroxyanthranilate + O2 = (2Z,4Z)-2-amino-3-carboxymuconate 6-semialdehyde. Its pathway is cofactor biosynthesis; NAD(+) biosynthesis; quinolinate from L-kynurenine: step 3/3. Functionally, catalyzes the oxidative ring opening of 3-hydroxyanthranilate to 2-amino-3-carboxymuconate semialdehyde, which spontaneously cyclizes to quinolinate. In Bacillus cereus (strain 03BB102), this protein is 3-hydroxyanthranilate 3,4-dioxygenase.